Consider the following 523-residue polypeptide: Putative L-type lectin-domain containing receptor kinase V.6 (523 aa).

The first 27 residues, 1-27 (MFSEVKVLQIVLVQWLTLFSFTYNSHG), serve as a signal peptide directing secretion. The segment at 28–242 (TYILDGSAVF…TGSIRALHYM (215 aa)) is legume-lectin like. Topologically, residues 28–279 (TYILDGSAVF…KPSDRLRTVL (252 aa)) are extracellular. N47, N59, N112, and N171 each carry an N-linked (GlcNAc...) asparagine glycan. A helical transmembrane segment spans residues 280–300 (AVCLTLALFAVFLASGIGFVF). Over 301-523 (YLRHKKVKEV…TGRAVRVKFF (223 aa)) the chain is Cytoplasmic. In terms of domain architecture, Protein kinase spans 335–523 (FKEKQLLGKG…TGRAVRVKFF (189 aa)). ATP-binding positions include 341–349 (LGKGGFGQV) and K364. D464 functions as the Proton acceptor in the catalytic mechanism.

In the C-terminal section; belongs to the protein kinase superfamily. Ser/Thr protein kinase family. The protein in the N-terminal section; belongs to the leguminous lectin family.

It localises to the cell membrane. It catalyses the reaction L-seryl-[protein] + ATP = O-phospho-L-seryl-[protein] + ADP + H(+). The enzyme catalyses L-threonyl-[protein] + ATP = O-phospho-L-threonyl-[protein] + ADP + H(+). The chain is Putative L-type lectin-domain containing receptor kinase V.6 (LECRK56) from Arabidopsis thaliana (Mouse-ear cress).